The following is a 379-amino-acid chain: Class V chitinase (379 aa).

A signal peptide spans 1–24; it reads MSSTKLISLIVSITFFLTLQCSMA. The 343-residue stretch at 27–369 folds into the GH18 domain; it reads VVKASYWFPA…RAASQAWDAT (343 aa). A chitin-binding site is contributed by G99. Residue E140 is the Proton donor of the active site. A chitin-binding site is contributed by Y259. N307 and N327 each carry an N-linked (GlcNAc...) asparagine glycan. W348 is a chitin binding site.

It belongs to the glycosyl hydrolase 18 family. Chitinase class V subfamily.

The catalysed reaction is Random endo-hydrolysis of N-acetyl-beta-D-glucosaminide (1-&gt;4)-beta-linkages in chitin and chitodextrins.. The enzyme catalyses Hydrolysis of N,N'-diacetylchitobiose from the non-reducing end of chitin and chitodextrins.. It functions in the pathway glycan degradation; chitin degradation. Its function is as follows. Can hydrolyze glycol chitin and chitin oligosaccharides (e.g. N-acetylglucosamine) (GlcNAc)4, (GlcNAc)5 and (GlcNAc)6. Hydrolyzes N-acetylglucosamine oligomers producing dimers from the non-reducing end of the substrates. This Arabidopsis thaliana (Mouse-ear cress) protein is Class V chitinase.